Here is a 196-residue protein sequence, read N- to C-terminus: Small ribosomal subunit protein uS4c (196 aa).

The interval 15–43 (LGALPGLTRKTPKSGSNQKKKFHSGKKEQ) is disordered. Positions 89-150 (MRLDNILFRL…NQRSKRLVQN (62 aa)) constitute an S4 RNA-binding domain.

The protein belongs to the universal ribosomal protein uS4 family. As to quaternary structure, part of the 30S ribosomal subunit. Contacts protein S5. The interaction surface between S4 and S5 is involved in control of translational fidelity.

Its subcellular location is the plastid. It is found in the chloroplast. Functionally, one of the primary rRNA binding proteins, it binds directly to 16S rRNA where it nucleates assembly of the body of the 30S subunit. With S5 and S12 plays an important role in translational accuracy. The chain is Small ribosomal subunit protein uS4c (rps4) from Melinis repens (Red Natal grass).